Reading from the N-terminus, the 283-residue chain is NADH-ubiquinone oxidoreductase 30.4 kDa subunit, mitochondrial (283 aa).

Residues 1–17 (MASKLCRSRALASALRS) constitute a mitochondrion transit peptide. Residues 258–283 (GAGIDRKPESFKLPTPKPETKPEEKK) form a disordered region.

It belongs to the complex I 30 kDa subunit family. Complex I is composed of about 40 different subunits. This is a component of the iron-sulfur protein fraction.

Its subcellular location is the mitochondrion inner membrane. It catalyses the reaction a ubiquinone + NADH + 5 H(+)(in) = a ubiquinol + NAD(+) + 4 H(+)(out). Functionally, core subunit of the mitochondrial membrane respiratory chain NADH dehydrogenase (Complex I) that is believed to belong to the minimal assembly required for catalysis. Complex I functions in the transfer of electrons from NADH to the respiratory chain. The immediate electron acceptor for the enzyme is believed to be ubiquinone. The protein is NADH-ubiquinone oxidoreductase 30.4 kDa subunit, mitochondrial (nuo-31) of Neurospora crassa (strain ATCC 24698 / 74-OR23-1A / CBS 708.71 / DSM 1257 / FGSC 987).